The primary structure comprises 655 residues: Forkhead box protein O1 (655 aa).

Disordered stretches follow at residues 1–63 (MAEA…SASA) and 116–158 (GCLH…SRRN). A Phosphothreonine; by PKB/AKT1 or PKB/AKT2 and SGK1 modification is found at T24. A compositionally biased stretch (low complexity) spans 33–63 (SQSNSATSSPAPSGSAAANPDAAAGLPSASA). Positions 120-141 (PAPPQPPPPGPLSQHPPVPPAA) are enriched in pro residues. The segment at residues 159–235 (AWGNLSYADL…VQNEGTGKSS (77 aa)) is a DNA-binding region (fork-head). 2 DNA-binding regions span residues 211–218 (NSIRHNLS) and 234–237 (SSWW). Residues S212, S218, S234, and S235 each carry the phosphoserine; by STK4/MST1 modification. Positions 234 to 344 (SSWWMLNPEG…QDDLGEGDVH (111 aa)) are disordered. N6-acetyllysine is present on residues K245 and K248. S249 is modified (phosphoserine; by CDK1). An omega-N-methylarginine; by PRMT1 mark is found at R251 and R253. The Nuclear localization signal motif lies at 251–253 (RRR). A Phosphoserine; by PKB/AKT1 and SGK1 modification is found at S256. 3 positions are modified to N6-acetyllysine: K262, K265, and K274. Basic residues predominate over residues 264–275 (AKSRSRAAKKKA). Residues 283-563 (GAGDSPGSQF…RLTQVKTPVQ (281 aa)) are sufficient for interaction with NLK. A phosphoserine mark is found at S287 and S298. Positions 309–326 (NWSTFRPRTSSNASTISG) are enriched in polar residues. Residue S319 is modified to Phosphoserine; by PKB/AKT1. S322 carries the post-translational modification Phosphoserine; by CK1 and SGK1. S325 is subject to Phosphoserine; by CK1. A Phosphoserine; by DYRK1A modification is found at S329. T333 bears the Phosphothreonine mark. A required for interaction with RUNX2 region spans residues 363 to 459 (SEISNPENME…GGMSQYNCAP (97 aa)). Position 423 is an N6-acetyllysine (K423). Positions 462-466 (LKELL) match the Required for interaction with SIRT1 motif. Positions 507–534 (YGSQASHNKMMNPSSHTHPGHAQQTSAV) are enriched in polar residues. Residues 507 to 537 (YGSQASHNKMMNPSSHTHPGHAQQTSAVNGR) form a disordered region.

In terms of assembly, interacts with LRPPRC. Interacts with RUNX2; the interaction inhibits RUNX2 transcriptional activity and mediates the IGF1/insulin-dependent BGLAP expression in osteoblasts Interacts with PPP2R1A; the interaction regulates the dephosphorylation of FOXO1 at Thr-24 and Ser-256 leading to its nuclear import. Interacts (acetylated form) with PPARG. Interacts with XBP1 isoform 2; this interaction is direct and leads to FOXO1 ubiquitination and degradation via the proteasome pathway. Interacts with NLK. Interacts with SIRT1; the interaction results in the deacetylation of FOXO1 leading to activation of FOXO1-mediated transcription of genes involved in DNA repair and stress resistance. Binds to CDK1. Interacts with the 14-3-3 proteins, YWHAG and YWHAZ; the interactions require insulin-stimulated phosphorylation on Thr-24, promote nuclear exit and loss of transcriptional activity. Interacts with SKP2; the interaction ubiquitinates FOXO1 leading to its proteasomal degradation. The interaction requires the presence of KRIT1. Interacts (via the C-terminal half) with ATF4 (via its DNA-binding domain); the interaction occurs in osteoblasts, regulates glucose homeostasis via suppression of beta-cell proliferation and subsequent decrease in insulin production. Interacts with PRMT1; the interaction methylates FOXO1, prevents PKB/AKT1 phosphorylation and retains FOXO1 in the nucleus. Interacts with EP300 and CREBBP; the interactions acetylate FOXO1. Interacts with SIRT2; the interaction is disrupted in response to oxidative stress or serum deprivation, leading to increased level of acetylated FOXO1, which promotes stress-induced autophagy by stimulating E1-like activating enzyme ATG7. Interacts (acetylated form) with ATG7; the interaction is increased in response to oxidative stress or serum deprivation and promotes the autophagic process leading to cell death. Interacts (via the Fork-head domain) with CEBPA; the interaction increases when FOXO1 is deacetylated. Interacts with WDFY2. Forms a complex with WDFY2 and AKT1. Interacts with CRY1. Interacts with PPIA/CYPA; the interaction promotes FOXO1 dephosphorylation, nuclear accumulation and transcriptional activity. Interacts with TOX4; FOXO1 is required for full induction of TOX4-dependent activity and the interaction is inhibited by insulin. Interacts (when phosphorylated on Ser-256) with STUB1/CHIP. Phosphorylation by NLK promotes nuclear export and inhibits the transcriptional activity. In response to growth factors, phosphorylation on Thr-24, Ser-256 and Ser-322 by PKB/AKT1 promotes nuclear export and inactivation of transactivational activity. Phosphorylation on Thr-24 is required for binding 14-3-3 proteins. Phosphorylation of Ser-256 decreases DNA-binding activity and promotes the phosphorylation of Thr-24 and Ser-319, permitting phosphorylation of Ser-322 and Ser-325, probably by CDK1, leading to nuclear exclusion and loss of function. Stress signals, such as response to oxygen or nitric oxide, attenuate the PKB/AKT1-mediated phosphorylation leading to nuclear retention. Phosphorylation of Ser-329 is independent of IGF1 and leads to reduced function. Dephosphorylated on Thr-24 and Ser-256 by PP2A in beta-cells under oxidative stress leading to nuclear retention. Phosphorylation of Ser-249 by CDK1 disrupts binding of 14-3-3 proteins leading to nuclear accumulation and has no effect on DNA-binding nor transcriptional activity. Phosphorylation by STK4/MST1 on Ser-212, upon oxidative stress, inhibits binding to 14-3-3 proteins and nuclear export. PPIA/CYPA promotes its dephosphorylation on Ser-256. In terms of processing, ubiquitinated by SKP2. Ubiquitination leads to proteasomal degradation. Ubiquitinated by STUB1/CHIP; when Ser-256 is phosphorylated. Post-translationally, methylation inhibits AKT1-mediated phosphorylation at Ser-256 and is increased by oxidative stress. Acetylated. Acetylation at Lys-262, Lys-265 and Lys-274 are necessary for autophagic cell death induction. Deacetylated by SIRT2 in response to oxidative stress or serum deprivation, thereby negatively regulating FOXO1-mediated autophagic cell death. Once in the nucleus, acetylated by CREBBP/EP300. Acetylation diminishes the interaction with target DNA and attenuates the transcriptional activity. It increases the phosphorylation at Ser-256. Deacetylation by SIRT1 results in reactivation of the transcriptional activity. Oxidative stress by hydrogen peroxide treatment appears to promote deacetylation and uncoupling of insulin-induced phosphorylation. By contrast, resveratrol acts independently of acetylation. Acetylated at Lys-423, promoting its localization to the nucleus and transcription factor activity. Deacetylation at Lys-423 by SIRT6, promotes its translocation into the cytoplasm, preventing its transcription factor activity. Deacetylation and subsequent inhibition by SIRT6 has different effects depending on cell types: it inhibits gluconeogenesis in hepatocytes, promotes glucose sensing in pancreatic beta-cells and regulates lipid catabolism in brown adipocytes. As to expression, expressed in umbilical endothelial cells (at protein level). Abundantly expressed in skeletal muscle and ovary, with lower expression in the heart, placenta, lung, liver, pancreas, spleen, testis and small intestine. Weakly expressed in the brain, thymus, prostate and mucosal lining of the colon.

Its subcellular location is the cytoplasm. It is found in the nucleus. Functionally, transcription factor that is the main target of insulin signaling and regulates metabolic homeostasis in response to oxidative stress. Binds to the insulin response element (IRE) with consensus sequence 5'-TT[G/A]TTTTG-3' and the related Daf-16 family binding element (DBE) with consensus sequence 5'-TT[G/A]TTTAC-3'. Activity suppressed by insulin. Main regulator of redox balance and osteoblast numbers and controls bone mass. Orchestrates the endocrine function of the skeleton in regulating glucose metabolism. Also acts as a key regulator of chondrogenic commitment of skeletal progenitor cells in response to lipid availability: when lipids levels are low, translocates to the nucleus and promotes expression of SOX9, which induces chondrogenic commitment and suppresses fatty acid oxidation. Acts synergistically with ATF4 to suppress osteocalcin/BGLAP activity, increasing glucose levels and triggering glucose intolerance and insulin insensitivity. Also suppresses the transcriptional activity of RUNX2, an upstream activator of osteocalcin/BGLAP. Acts as an inhibitor of glucose sensing in pancreatic beta cells by acting as a transcription repressor and suppressing expression of PDX1. In hepatocytes, promotes gluconeogenesis by acting together with PPARGC1A and CEBPA to activate the expression of genes such as IGFBP1, G6PC1 and PCK1. Also promotes gluconeogenesis by directly promoting expression of PPARGC1A and G6PC1. Important regulator of cell death acting downstream of CDK1, PKB/AKT1 and STK4/MST1. Promotes neural cell death. Mediates insulin action on adipose tissue. Regulates the expression of adipogenic genes such as PPARG during preadipocyte differentiation and, adipocyte size and adipose tissue-specific gene expression in response to excessive calorie intake. Regulates the transcriptional activity of GADD45A and repair of nitric oxide-damaged DNA in beta-cells. Required for the autophagic cell death induction in response to starvation or oxidative stress in a transcription-independent manner. Mediates the function of MLIP in cardiomyocytes hypertrophy and cardiac remodeling. Positive regulator of apoptosis in cardiac smooth muscle cells as a result of its transcriptional activation of pro-apoptotic genes. Regulates endothelial cell (EC) viability and apoptosis in a PPIA/CYPA-dependent manner via transcription of CCL2 and BCL2L11 which are involved in EC chemotaxis and apoptosis. The sequence is that of Forkhead box protein O1 from Homo sapiens (Human).